A 44-amino-acid polypeptide reads, in one-letter code: Large ribosomal subunit protein bL36 (44 aa).

The protein belongs to the bacterial ribosomal protein bL36 family.

The sequence is that of Large ribosomal subunit protein bL36 from Pseudoalteromonas translucida (strain TAC 125).